A 332-amino-acid polypeptide reads, in one-letter code: Glycerol-3-phosphate dehydrogenase [NAD(P)+] (332 aa).

Residues tryptophan 13, arginine 33, and lysine 105 each contribute to the NADPH site. Positions 105, 134, and 136 each coordinate sn-glycerol 3-phosphate. An NADPH-binding site is contributed by alanine 138. Sn-glycerol 3-phosphate-binding residues include lysine 189, aspartate 242, serine 252, arginine 253, and asparagine 254. The active-site Proton acceptor is the lysine 189. Position 253 (arginine 253) interacts with NADPH. Glutamate 279 serves as a coordination point for NADPH.

It belongs to the NAD-dependent glycerol-3-phosphate dehydrogenase family.

The protein localises to the cytoplasm. It catalyses the reaction sn-glycerol 3-phosphate + NAD(+) = dihydroxyacetone phosphate + NADH + H(+). It carries out the reaction sn-glycerol 3-phosphate + NADP(+) = dihydroxyacetone phosphate + NADPH + H(+). Its pathway is membrane lipid metabolism; glycerophospholipid metabolism. In terms of biological role, catalyzes the reduction of the glycolytic intermediate dihydroxyacetone phosphate (DHAP) to sn-glycerol 3-phosphate (G3P), the key precursor for phospholipid synthesis. The polypeptide is Glycerol-3-phosphate dehydrogenase [NAD(P)+] (Halorhodospira halophila (strain DSM 244 / SL1) (Ectothiorhodospira halophila (strain DSM 244 / SL1))).